The primary structure comprises 202 residues: dTTP/UTP pyrophosphatase (202 aa).

Catalysis depends on Asp-80, which acts as the Proton acceptor.

This sequence belongs to the Maf family. YhdE subfamily. The cofactor is a divalent metal cation.

It localises to the cytoplasm. It catalyses the reaction dTTP + H2O = dTMP + diphosphate + H(+). The catalysed reaction is UTP + H2O = UMP + diphosphate + H(+). Functionally, nucleoside triphosphate pyrophosphatase that hydrolyzes dTTP and UTP. May have a dual role in cell division arrest and in preventing the incorporation of modified nucleotides into cellular nucleic acids. In Alkalilimnicola ehrlichii (strain ATCC BAA-1101 / DSM 17681 / MLHE-1), this protein is dTTP/UTP pyrophosphatase.